The following is a 141-amino-acid chain: Hemoglobin subunit alpha (141 aa).

Positions 1-141 constitute a Globin domain; sequence VLSPADKANI…VSTVLTSKYR (141 aa). At serine 3 the chain carries Phosphoserine. N6-succinyllysine occurs at positions 7 and 11. An N6-acetyllysine; alternate modification is found at lysine 16. Lysine 16 is modified (N6-succinyllysine; alternate). Tyrosine 24 is modified (phosphotyrosine). Phosphoserine is present on serine 35. N6-succinyllysine is present on lysine 40. Serine 49 is modified (phosphoserine). Histidine 58 is an O2 binding site. Histidine 87 contacts heme b. The residue at position 102 (serine 102) is a Phosphoserine. A Phosphothreonine modification is found at threonine 108. Serine 124 and serine 131 each carry phosphoserine. A phosphothreonine mark is found at threonine 134 and threonine 137. Residue serine 138 is modified to Phosphoserine.

The protein belongs to the globin family. As to quaternary structure, heterotetramer of two alpha chains and two beta chains. Red blood cells.

In terms of biological role, involved in oxygen transport from the lung to the various peripheral tissues. Its function is as follows. Hemopressin acts as an antagonist peptide of the cannabinoid receptor CNR1. Hemopressin-binding efficiently blocks cannabinoid receptor CNR1 and subsequent signaling. The polypeptide is Hemoglobin subunit alpha (HBA) (Meles meles (Eurasian badger)).